The primary structure comprises 87 residues: Small ribosomal subunit protein bS20 (87 aa).

Residues 1-24 (MANTAQARKRARQSVERNKHNSSL) are disordered.

It belongs to the bacterial ribosomal protein bS20 family.

Its function is as follows. Binds directly to 16S ribosomal RNA. The sequence is that of Small ribosomal subunit protein bS20 from Bordetella avium (strain 197N).